We begin with the raw amino-acid sequence, 31 residues long: Photosystem II reaction center protein T (31 aa).

The helical transmembrane segment at 3-23 (ALVYTFLLISTLGIIFFGIFF) threads the bilayer.

This sequence belongs to the PsbT family. In terms of assembly, PSII is composed of 1 copy each of membrane proteins PsbA, PsbB, PsbC, PsbD, PsbE, PsbF, PsbH, PsbI, PsbJ, PsbK, PsbL, PsbM, PsbT, PsbY, PsbZ, Psb30/Ycf12, at least 3 peripheral proteins of the oxygen-evolving complex and a large number of cofactors. It forms dimeric complexes.

The protein localises to the plastid. The protein resides in the chloroplast thylakoid membrane. Found at the monomer-monomer interface of the photosystem II (PS II) dimer, plays a role in assembly and dimerization of PSII. PSII is a light-driven water plastoquinone oxidoreductase, using light energy to abstract electrons from H(2)O, generating a proton gradient subsequently used for ATP formation. The chain is Photosystem II reaction center protein T from Nephroselmis olivacea (Green alga).